Consider the following 432-residue polypeptide: D-amino acid dehydrogenase (432 aa).

3–17 (VVILGSGVVGVTSAW) serves as a coordination point for FAD.

It belongs to the DadA oxidoreductase family. FAD serves as cofactor.

The enzyme catalyses a D-alpha-amino acid + A + H2O = a 2-oxocarboxylate + AH2 + NH4(+). The protein operates within amino-acid degradation; D-alanine degradation; NH(3) and pyruvate from D-alanine: step 1/1. In terms of biological role, oxidative deamination of D-amino acids. This Salmonella choleraesuis (strain SC-B67) protein is D-amino acid dehydrogenase.